A 201-amino-acid chain; its full sequence is Large ribosomal subunit protein bL25 (201 aa).

The protein belongs to the bacterial ribosomal protein bL25 family. CTC subfamily. As to quaternary structure, part of the 50S ribosomal subunit; part of the 5S rRNA/L5/L18/L25 subcomplex. Contacts the 5S rRNA. Binds to the 5S rRNA independently of L5 and L18.

In terms of biological role, this is one of the proteins that binds to the 5S RNA in the ribosome where it forms part of the central protuberance. The polypeptide is Large ribosomal subunit protein bL25 (Burkholderia multivorans (strain ATCC 17616 / 249)).